A 194-amino-acid chain; its full sequence is Chitin synthase 2 (194 aa).

Belongs to the chitin synthase family. Class III subfamily.

The protein localises to the cell membrane. It carries out the reaction [(1-&gt;4)-N-acetyl-beta-D-glucosaminyl](n) + UDP-N-acetyl-alpha-D-glucosamine = [(1-&gt;4)-N-acetyl-beta-D-glucosaminyl](n+1) + UDP + H(+). Functionally, polymerizes chitin, a structural polymer of the cell wall and septum, by transferring the sugar moiety of UDP-GlcNAc to the non-reducing end of the growing chitin polymer. The protein is Chitin synthase 2 (CHS2) of Ajellomyces capsulatus (Darling's disease fungus).